The primary structure comprises 78 residues: Acyl carrier protein (78 aa).

The region spanning M1–G76 is the Carrier domain. S36 carries the post-translational modification O-(pantetheine 4'-phosphoryl)serine.

It belongs to the acyl carrier protein (ACP) family. In terms of processing, 4'-phosphopantetheine is transferred from CoA to a specific serine of apo-ACP by AcpS. This modification is essential for activity because fatty acids are bound in thioester linkage to the sulfhydryl of the prosthetic group.

It localises to the cytoplasm. Its pathway is lipid metabolism; fatty acid biosynthesis. Carrier of the growing fatty acid chain in fatty acid biosynthesis. This chain is Acyl carrier protein, found in Bdellovibrio bacteriovorus (strain ATCC 15356 / DSM 50701 / NCIMB 9529 / HD100).